We begin with the raw amino-acid sequence, 210 residues long: NADH dehydrogenase [ubiquinone] iron-sulfur protein 8, mitochondrial (210 aa).

The N-terminal 34 residues, 1 to 34 (MRCLTMPTLLRALAQAAHTGPPGGRTLHSSAVAA), are a transit peptide targeting the mitochondrion. 2 4Fe-4S ferredoxin-type domains span residues 102–131 (RRYPSGEERCIACKLCEAVCPAQAITIEAE) and 141–170 (TRYDIDMTKCIYCGFCQEACPVDAIVEGPN). [4Fe-4S] cluster contacts are provided by Cys-111, Cys-114, Cys-117, Cys-121, Cys-150, Cys-153, Cys-156, and Cys-160.

This sequence belongs to the complex I 23 kDa subunit family. Core subunit of respiratory chain NADH dehydrogenase (Complex I) which is composed of 45 different subunits. This is a component of the iron-sulfur (IP) fragment of the enzyme. Interacts with RAB5IF. Requires [4Fe-4S] cluster as cofactor.

The protein localises to the mitochondrion inner membrane. It carries out the reaction a ubiquinone + NADH + 5 H(+)(in) = a ubiquinol + NAD(+) + 4 H(+)(out). Core subunit of the mitochondrial membrane respiratory chain NADH dehydrogenase (Complex I) which catalyzes electron transfer from NADH through the respiratory chain, using ubiquinone as an electron acceptor. Essential for the catalytic activity and assembly of complex I. This Macaca fascicularis (Crab-eating macaque) protein is NADH dehydrogenase [ubiquinone] iron-sulfur protein 8, mitochondrial (NDUFS8).